We begin with the raw amino-acid sequence, 235 residues long: MGQKVHPHGIRLGIVKPWSSTWFANTQDFADNLDGDFKVRKFLNKELANASVSRITIERPAKSIRVTIHTARPGIVIGKKGEDVEKLRNAVAAIAGVPAQINIAEVKKPELDAKLVADSIASQLERRVMFRRAMKRAVQNAMRLGAKGIKVEVSGRLGGAEIARSEWYREGRVPLHTLRADIDYNTAEAHTTYGVIGIKVWIFKGEILGGMAAIAQPEQQPADKPKKAPRGKGRK.

The 69-residue stretch at 39–107 (VRKFLNKELA…PAQINIAEVK (69 aa)) folds into the KH type-2 domain. Residues 215-235 (AQPEQQPADKPKKAPRGKGRK) form a disordered region.

It belongs to the universal ribosomal protein uS3 family. As to quaternary structure, part of the 30S ribosomal subunit. Forms a tight complex with proteins S10 and S14.

Its function is as follows. Binds the lower part of the 30S subunit head. Binds mRNA in the 70S ribosome, positioning it for translation. The sequence is that of Small ribosomal subunit protein uS3 from Pasteurella multocida (strain Pm70).